Here is a 322-residue protein sequence, read N- to C-terminus: MTEQSSGSATEQATEQETAKQETGRKNEQPEERTVTDGRYLYCLINTTTAESETGSEQESKAGSEQESKAGSEQESEQATVDWSTTGVDDNTVYVIEGESVGAVVHDCERIYDTESPEQVKQWVLRHQHVVDAASDVFGTPLPMRFNTILEGGDTSVTQWLHENHDTVREELTSFAGTWEYRIHLFWEPSTFEAQIEDEDDQLQELQQRQEEAGSGKSFLLKKQYDKRLRERKQNRRAELTTTLQETVRPVVRELLKQGSGSQLAEDTTPTKKEQVTRLAVLADEENETVLGDRLDEIVEQDGVSIKFTGPWPPYTFAPDLG.

Residues 1 to 85 (MTEQSSGSAT…SEQATVDWST (85 aa)) are disordered. The segment covering 17–36 (ETAKQETGRKNEQPEERTVT) has biased composition (basic and acidic residues). Residues 45–57 (INTTTAESETGSE) are compositionally biased toward polar residues. Over residues 58-72 (QESKAGSEQESKAGS) the composition is skewed to basic and acidic residues. Polar residues predominate over residues 73–85 (EQESEQATVDWST).

It belongs to the gas vesicle GvpF/GvpL family. GvpF to GvpM interact with each other in vitro, and may form multi-subunit complex(es). Interacts with GvpC, GvpN and GvpO.

It localises to the gas vesicle. In terms of biological role, proteins GvpF to GvpM might be involved in nucleating gas vesicle formation. A minor component of the gas vesicle. Gas vesicles are small, hollow, gas filled protein structures that are found in several microbial planktonic microorganisms. They allow positioning of halobacteria at the optimal depth for growth in the poorly aerated, shallow brine pools of their habitat. Its function is as follows. Expression of a 9.5 kb mc-vac DNA fragment containing 2 divergently transcribed regions (gvpD-gvpE-gvpF-gvpG-gvpH-gvpI-gvpJ-gvpK-gvpL-gvpM and gvpA-gvpC-gvpN-gvpO) allows H.volcanii to produce gas vesicles. In Haloferax mediterranei (strain ATCC 33500 / DSM 1411 / JCM 8866 / NBRC 14739 / NCIMB 2177 / R-4) (Halobacterium mediterranei), this protein is Gas vesicle protein L.